The chain runs to 238 residues: Large ribosomal subunit protein uL1 (238 aa).

It belongs to the universal ribosomal protein uL1 family. Part of the 50S ribosomal subunit.

Functionally, binds directly to 23S rRNA. The L1 stalk is quite mobile in the ribosome, and is involved in E site tRNA release. Protein L1 is also a translational repressor protein, it controls the translation of the L11 operon by binding to its mRNA. In Beutenbergia cavernae (strain ATCC BAA-8 / DSM 12333 / CCUG 43141 / JCM 11478 / NBRC 16432 / NCIMB 13614 / HKI 0122), this protein is Large ribosomal subunit protein uL1.